We begin with the raw amino-acid sequence, 993 residues long: Chromosome transmission fidelity protein 18 homolog (993 aa).

The interval 26–72 is disordered; it reads PDEFNAYDGPSTSKQAAEKQKENRAPVAALRDSTRLGNSTLGSPQLS. Polar residues predominate over residues 60 to 72; the sequence is RLGNSTLGSPQLS. Residue 427–434 participates in ATP binding; sequence GPPGLGKT. The disordered stretch occupies residues 892 to 913; the sequence is AAPKGGAPSAPAAKKKTSGAAA. Over residues 894–913 the composition is skewed to low complexity; the sequence is PKGGAPSAPAAKKKTSGAAA.

Belongs to the activator 1 small subunits family. CTF18 subfamily. Component of the CTF18-RFC complex.

Its subcellular location is the nucleus. Chromosome cohesion factor involved in sister chromatid cohesion and fidelity of chromosome transmission. Component of one of the cell nuclear antigen loader complexes, CTF18-replication factor C (CTF18-RFC). The CTF18-RFC complex catalyzes the ATP-dependent loading of PCNA onto primed and gapped DNA and has weak ATPase activity. The CTF18-RFC complex catalyzes the ATP-dependent loading of PCNA onto primed and gapped DNA. In Drosophila melanogaster (Fruit fly), this protein is Chromosome transmission fidelity protein 18 homolog.